Reading from the N-terminus, the 373-residue chain is 4-hydroxy-3-methylbut-2-en-1-yl diphosphate synthase (flavodoxin) (373 aa).

[4Fe-4S] cluster-binding residues include Cys-269, Cys-272, Cys-304, and Glu-311.

It belongs to the IspG family. It depends on [4Fe-4S] cluster as a cofactor.

It carries out the reaction (2E)-4-hydroxy-3-methylbut-2-enyl diphosphate + oxidized [flavodoxin] + H2O + 2 H(+) = 2-C-methyl-D-erythritol 2,4-cyclic diphosphate + reduced [flavodoxin]. Its pathway is isoprenoid biosynthesis; isopentenyl diphosphate biosynthesis via DXP pathway; isopentenyl diphosphate from 1-deoxy-D-xylulose 5-phosphate: step 5/6. Converts 2C-methyl-D-erythritol 2,4-cyclodiphosphate (ME-2,4cPP) into 1-hydroxy-2-methyl-2-(E)-butenyl 4-diphosphate. This chain is 4-hydroxy-3-methylbut-2-en-1-yl diphosphate synthase (flavodoxin), found in Baumannia cicadellinicola subsp. Homalodisca coagulata.